We begin with the raw amino-acid sequence, 337 residues long: UDP-3-O-acylglucosamine N-acyltransferase (337 aa).

His238 (proton acceptor) is an active-site residue.

Belongs to the transferase hexapeptide repeat family. LpxD subfamily. As to quaternary structure, homotrimer.

The catalysed reaction is a UDP-3-O-[(3R)-3-hydroxyacyl]-alpha-D-glucosamine + a (3R)-hydroxyacyl-[ACP] = a UDP-2-N,3-O-bis[(3R)-3-hydroxyacyl]-alpha-D-glucosamine + holo-[ACP] + H(+). It functions in the pathway bacterial outer membrane biogenesis; LPS lipid A biosynthesis. In terms of biological role, catalyzes the N-acylation of UDP-3-O-acylglucosamine using 3-hydroxyacyl-ACP as the acyl donor. Is involved in the biosynthesis of lipid A, a phosphorylated glycolipid that anchors the lipopolysaccharide to the outer membrane of the cell. This Xanthomonas euvesicatoria pv. vesicatoria (strain 85-10) (Xanthomonas campestris pv. vesicatoria) protein is UDP-3-O-acylglucosamine N-acyltransferase.